Here is a 148-residue protein sequence, read N- to C-terminus: 3-hydroxyacyl-[acyl-carrier-protein] dehydratase FabZ (148 aa).

The active site involves His-50.

Belongs to the thioester dehydratase family. FabZ subfamily.

It localises to the cytoplasm. The catalysed reaction is a (3R)-hydroxyacyl-[ACP] = a (2E)-enoyl-[ACP] + H2O. Its function is as follows. Involved in unsaturated fatty acids biosynthesis. Catalyzes the dehydration of short chain beta-hydroxyacyl-ACPs and long chain saturated and unsaturated beta-hydroxyacyl-ACPs. In Levilactobacillus brevis (strain ATCC 367 / BCRC 12310 / CIP 105137 / JCM 1170 / LMG 11437 / NCIMB 947 / NCTC 947) (Lactobacillus brevis), this protein is 3-hydroxyacyl-[acyl-carrier-protein] dehydratase FabZ.